A 211-amino-acid chain; its full sequence is Prolactin (211 aa).

A signal peptide spans 1–24 (MTHRRTKLFMMAAVVSYVMTSCGA). 2 disulfides stabilise this stretch: Cys-70–Cys-184 and Cys-201–Cys-211.

It belongs to the somatotropin/prolactin family.

Its subcellular location is the secreted. The protein is Prolactin (prl) of Paralichthys olivaceus (Bastard halibut).